A 130-amino-acid polypeptide reads, in one-letter code: Ribosome-binding factor A (130 aa).

Belongs to the RbfA family. In terms of assembly, monomer. Binds 30S ribosomal subunits, but not 50S ribosomal subunits or 70S ribosomes.

The protein resides in the cytoplasm. Its function is as follows. One of several proteins that assist in the late maturation steps of the functional core of the 30S ribosomal subunit. Associates with free 30S ribosomal subunits (but not with 30S subunits that are part of 70S ribosomes or polysomes). Required for efficient processing of 16S rRNA. May interact with the 5'-terminal helix region of 16S rRNA. This Lachnospira eligens (strain ATCC 27750 / DSM 3376 / VPI C15-48 / C15-B4) (Eubacterium eligens) protein is Ribosome-binding factor A.